A 433-amino-acid polypeptide reads, in one-letter code: Enolase (433 aa).

Position 167 (Gln-167) interacts with (2R)-2-phosphoglycerate. The Proton donor role is filled by Glu-209. Asp-246, Glu-291, and Asp-318 together coordinate Mg(2+). The residue at position 326 (Lys-326) is an N6-acetyllysine. Residues Lys-343, Arg-372, Ser-373, and Lys-394 each coordinate (2R)-2-phosphoglycerate. Catalysis depends on Lys-343, which acts as the Proton acceptor. N6-(2-hydroxyisobutyryl)lysine is present on Lys-343.

The protein belongs to the enolase family. As to quaternary structure, component of the RNA degradosome, a multiprotein complex involved in RNA processing and mRNA degradation. The cofactor is Mg(2+). Post-translationally, acetylated and 2-hydroxyisobutyrylated at Lys-326 and Lys-343, respectively, reducing the enolase activity. Deacetylated and de-2-hydroxyisobutyrylated by NpdA/CobB, increasing the enolase activity.

Its subcellular location is the cytoplasm. It is found in the secreted. The protein localises to the cell surface. It carries out the reaction (2R)-2-phosphoglycerate = phosphoenolpyruvate + H2O. It functions in the pathway carbohydrate degradation; glycolysis; pyruvate from D-glyceraldehyde 3-phosphate: step 4/5. Functionally, catalyzes the reversible conversion of 2-phosphoglycerate (2-PG) into phosphoenolpyruvate (PEP). It is essential for the degradation of carbohydrates via glycolysis. This chain is Enolase, found in Proteus mirabilis (strain HI4320).